The following is a 36-amino-acid chain: uncharacterized protein (36 aa).

A helical transmembrane segment spans residues 13 to 35; sequence SVILSPFPCCVLKSYLTVIYISF.

It is found in the host membrane. This is an uncharacterized protein from Pseudoalteromonas espejiana (Bacteriophage PM2).